The following is a 331-amino-acid chain: tRNA pseudouridine synthase B (331 aa).

Asp-51 (nucleophile) is an active-site residue.

The protein belongs to the pseudouridine synthase TruB family. Type 1 subfamily.

It catalyses the reaction uridine(55) in tRNA = pseudouridine(55) in tRNA. Its function is as follows. Responsible for synthesis of pseudouridine from uracil-55 in the psi GC loop of transfer RNAs. The sequence is that of tRNA pseudouridine synthase B from Verminephrobacter eiseniae (strain EF01-2).